The following is a 435-amino-acid chain: Cell adhesion molecule 2 (435 aa).

Residues 1–24 form the signal peptide; that stretch reads MIWKRSAVLRFYSVCGLLLQGSQG. Over 25-367 the chain is Extracellular; sequence QFPLTQNVTV…SLAGQNGPDH (343 aa). The region spanning 27–119 is the Ig-like V-type domain; sequence PLTQNVTVVE…PVKTSKAYLT (93 aa). Residues Asn-31 and Asn-51 are each glycosylated (N-linked (GlcNAc...) asparagine). 3 cysteine pairs are disulfide-bonded: Cys-44–Cys-104, Cys-146–Cys-203, and Cys-248–Cys-296. Ig-like C2-type domains are found at residues 127–219 and 227–312; these read PQIS…VAMQ and PSVK…YVLI. N-linked (GlcNAc...) asparagine glycosylation occurs at Asn-291. The segment covering 337–351 has biased composition (low complexity); the sequence is SVTITTSPSTSASSS. Positions 337 to 360 are disordered; sequence SVTITTSPSTSASSSSRRDPNSLA. Residues 368-388 traverse the membrane as a helical segment; sequence ALIGGIVAVVVFVTLCSIFLL. Topologically, residues 389–435 are cytoplasmic; sequence GRYLARHKGTYLTNEAKGAEDAPDADTAIINAEGSQVNAEEKKEYFI. Ser-423 is modified (phosphoserine).

The protein belongs to the nectin family. Post-translationally, glycosylation at Asn-51 reduces adhesive binding.

It is found in the cell membrane. It localises to the synapse. The protein resides in the cell projection. Its subcellular location is the axon. Adhesion molecule that engages in homo- and heterophilic interactions with the other nectin-like family members, leading to cell aggregation. Important for synapse organization, providing regulated trans-synaptic adhesion. Preferentially binds to oligodendrocytes. The protein is Cell adhesion molecule 2 (Cadm2) of Mus musculus (Mouse).